We begin with the raw amino-acid sequence, 492 residues long: Nitrogenase molybdenum-iron protein alpha chain (492 aa).

3 residues coordinate [8Fe-7S] cluster: Cys62, Cys88, and Cys154. The [7Fe-Mo-9S-C-homocitryl] cluster site is built by Cys275 and His442.

This sequence belongs to the NifD/NifK/NifE/NifN family. As to quaternary structure, tetramer of two alpha and two beta chains. Forms complex with the iron protein (nitrogenase component 2). [8Fe-7S] cluster is required as a cofactor. The cofactor is [7Fe-Mo-9S-C-homocitryl] cluster.

It carries out the reaction N2 + 8 reduced [2Fe-2S]-[ferredoxin] + 16 ATP + 16 H2O = H2 + 8 oxidized [2Fe-2S]-[ferredoxin] + 2 NH4(+) + 16 ADP + 16 phosphate + 6 H(+). Its activity is regulated as follows. Nitrogenase holoenzyme is subject to 'conformational protection' by FeSII; under oxidizing conditions FeSII binds to the holoenzyme and reversibly protects it from oxidation. Its function is as follows. This molybdenum-iron protein is part of the nitrogenase complex that catalyzes the key enzymatic reactions in nitrogen fixation. The sequence is that of Nitrogenase molybdenum-iron protein alpha chain (nifD) from Azotobacter vinelandii.